The chain runs to 379 residues: Pectin lyase A (379 aa).

Positions 1 to 20 (MKYSTIFSAAAAVFAGSAAA) are cleaved as a signal peptide. 2 disulfides stabilise this stretch: Cys83/Cys102 and Cys92/Cys226. Thr88 is a glycosylation site (O-linked (Man) threonine). A glycan (N-linked (GlcNAc...) asparagine) is linked at Asn129. Arg256 is a catalytic residue. Residues Cys322 and Cys330 are joined by a disulfide bond. O-linked (Man) serine; in strain 4M-147 glycosylation is present at Ser368.

Belongs to the polysaccharide lyase 1 family. N-glycosylated at Asn-129 and O-glycosylated at Thr-88 when expressed in Aspergillus nidulans. The protein from strain 4M-147 is O-glycosylated at Thr-88 and Ser-368. PubMed:9195887 modeled GalNAc at the O-glycosylation site, a glycosylation not observed in fungi. The O-linked saccharide is probably mannose.

The protein localises to the secreted. The enzyme catalyses Eliminative cleavage of (1-&gt;4)-alpha-D-galacturonan methyl ester to give oligosaccharides with 4-deoxy-6-O-methyl-alpha-D-galact-4-enuronosyl groups at their non-reducing ends.. Pectinolytic enzymes consist of four classes of enzymes: pectin lyase, polygalacturonase, pectin methylesterase and rhamnogalacturonase. Among pectinolytic enzymes, pectin lyase is the most important in depolymerization of pectin, since it cleaves internal glycosidic bonds of highly methylated pectins. In Aspergillus niger, this protein is Pectin lyase A (pelA).